Here is a 272-residue protein sequence, read N- to C-terminus: NAD kinase (272 aa).

Asp-50 functions as the Proton acceptor in the catalytic mechanism. NAD(+)-binding positions include 50–51, 126–127, Arg-152, Asp-154, 165–170, and Ala-189; these read DG, NE, and TAYNKS.

This sequence belongs to the NAD kinase family. A divalent metal cation serves as cofactor.

Its subcellular location is the cytoplasm. It catalyses the reaction NAD(+) + ATP = ADP + NADP(+) + H(+). Functionally, involved in the regulation of the intracellular balance of NAD and NADP, and is a key enzyme in the biosynthesis of NADP. Catalyzes specifically the phosphorylation on 2'-hydroxyl of the adenosine moiety of NAD to yield NADP. The chain is NAD kinase from Streptococcus pneumoniae (strain Hungary19A-6).